The chain runs to 938 residues: AP-2 complex subunit alpha-2 (938 aa).

Residues 11–12 (RG), K43, Y53, and 57–61 (KYVCK) each bind a 1,2-diacyl-sn-glycero-3-phospho-(1D-myo-inositol-3,4,5-trisphosphate). The segment at 616 to 677 (LKKKKGPSTV…APPVPAGPPP (62 aa)) is disordered. Positions 645-668 (PALASTSAVSTPSPSADLLGLGAA) are enriched in low complexity.

Belongs to the adaptor complexes large subunit family. In terms of assembly, adaptor protein complex 2 (AP-2) is a heterotetramer composed of two large adaptins (alpha-type subunit AP2A1 or AP2A2 and beta-type subunit AP2B1), a medium adaptin (mu-type subunit AP2M1) and a small adaptin (sigma-type subunit AP2S1). Binds clathrin. Binds EPN1, EPS15, AMPH, SNAP91 and BIN1. Interacts with HIP1. Interacts with DGKD. Interacts with DENND1A, DENND1B and DENND1C. Interacts with FCHO1. Interacts with ATAT1; this interaction is required for efficient alpha-tubulin acetylation by ATAT1. Interacts with KIAA1107. Together with AP2B1 and AP2M1, it interacts with ADAM10; this interaction facilitates ADAM10 endocytosis from the plasma membrane during long-term potentiation in hippocampal neurons. Interacts with CLN3 (via dileucine motif). Interacts with ABCB11; this interaction regulates cell membrane expression of ABCB11 through its internalization in a clathrin-dependent manner and its subsequent degradation. Interacts with DNAJC6.

It localises to the cell membrane. Its subcellular location is the membrane. The protein resides in the coated pit. Its function is as follows. Component of the adaptor protein complex 2 (AP-2). Adaptor protein complexes function in protein transport via transport vesicles in different membrane traffic pathways. Adaptor protein complexes are vesicle coat components and appear to be involved in cargo selection and vesicle formation. AP-2 is involved in clathrin-dependent endocytosis in which cargo proteins are incorporated into vesicles surrounded by clathrin (clathrin-coated vesicles, CCVs) which are destined for fusion with the early endosome. The clathrin lattice serves as a mechanical scaffold but is itself unable to bind directly to membrane components. Clathrin-associated adaptor protein (AP) complexes which can bind directly to both the clathrin lattice and to the lipid and protein components of membranes are considered to be the major clathrin adaptors contributing the CCV formation. AP-2 also serves as a cargo receptor to selectively sort the membrane proteins involved in receptor-mediated endocytosis. AP-2 seems to play a role in the recycling of synaptic vesicle membranes from the presynaptic surface. AP-2 recognizes Y-X-X-[FILMV] (Y-X-X-Phi) and [ED]-X-X-X-L-[LI] endocytosis signal motifs within the cytosolic tails of transmembrane cargo molecules. AP-2 may also play a role in maintaining normal post-endocytic trafficking through the ARF6-regulated, non-clathrin pathway. During long-term potentiation in hippocampal neurons, AP-2 is responsible for the endocytosis of ADAM10. The AP-2 alpha subunit binds polyphosphoinositide-containing lipids, positioning AP-2 on the membrane. The AP-2 alpha subunit acts via its C-terminal appendage domain as a scaffolding platform for endocytic accessory proteins. The AP-2 alpha and AP-2 sigma subunits are thought to contribute to the recognition of the [ED]-X-X-X-L-[LI] motif. The sequence is that of AP-2 complex subunit alpha-2 from Bos taurus (Bovine).